Reading from the N-terminus, the 313-residue chain is Probable 5-dehydro-4-deoxyglucarate dehydratase (313 aa).

This sequence belongs to the DapA family.

It catalyses the reaction 5-dehydro-4-deoxy-D-glucarate + H(+) = 2,5-dioxopentanoate + CO2 + H2O. It participates in carbohydrate acid metabolism; D-glucarate degradation; 2,5-dioxopentanoate from D-glucarate: step 2/2. The sequence is that of Probable 5-dehydro-4-deoxyglucarate dehydratase from Bradyrhizobium sp. (strain BTAi1 / ATCC BAA-1182).